We begin with the raw amino-acid sequence, 942 residues long: Homeobox protein 2 (942 aa).

Composition is skewed to low complexity over residues 32-87 and 98-130; these read ECNE…NINE and SPYSSPSSSISSPSRSPSPNSPASSSPIHSPIP. Disordered stretches follow at residues 32–149, 161–494, 537–580, and 609–942; these read ECNE…PQNI, LESP…RLKK, RQEK…QGGA, and FKNN…CQQN. The span at 131–149 shows a compositional bias: polar residues; sequence NTNFKQSGEYQSIPSPQNI. A compositionally biased stretch (low complexity) spans 163–261; it reads SPNSSNSSPS…PSSNLSKSNS (99 aa). Residues 269 to 290 are compositionally biased toward polar residues; the sequence is QAPSNTSSPQLLSPNHNQQRIS. Low complexity-rich tracts occupy residues 299–430 and 450–464; these read NNNH…NSSP and NNNNNNNNNNNSNSS. Over residues 465-481 the composition is skewed to polar residues; it reads FDEYQPQQKVSRSNSPN. A DNA-binding region (homeobox) is located at residues 485–544; that stretch reads EKKRRTRLKKEQADILKTFFDNDDYPTKDDKETLANRLGMSYCAVTTWFSNKRQEKKRRG. Low complexity-rich tracts occupy residues 609-621, 628-685, 694-737, 752-764, 776-864, and 890-927; these read FKNNNMDNNNKNV, NNNN…GSSD, NNNN…NNNN, NNNNNNNNNNNNN, SDDT…YLNN, and NNFNGDNNNNNNNKNNNNNNQNNNGNGNNNNNNNNDNN. Positions 835–865 form a coiled coil; it reads NNNNNNNNQNNNNNNNNNQYNNNNKNYLNNI.

Its subcellular location is the nucleus. In terms of biological role, putative transcription factor that may potentiate the function of warA. This is Homeobox protein 2 (hbx2) from Dictyostelium discoideum (Social amoeba).